The chain runs to 84 residues: Large ribosomal subunit protein bL27 (84 aa).

A disordered region spans residues 1–21 (MAHKKGGGSTKNGRDSNPKYL).

The protein belongs to the bacterial ribosomal protein bL27 family.

This is Large ribosomal subunit protein bL27 from Chlorobium limicola (strain DSM 245 / NBRC 103803 / 6330).